We begin with the raw amino-acid sequence, 331 residues long: DNA-directed RNA polymerase subunit alpha (331 aa).

Positions 1-226 (MLIAQRPTLT…ELFGLARELN (226 aa)) are alpha N-terminal domain (alpha-NTD). Residues 243–331 (LSSELSMPIE…SYDEDETTTN (89 aa)) form an alpha C-terminal domain (alpha-CTD) region.

The protein belongs to the RNA polymerase alpha chain family. As to quaternary structure, homodimer. The RNAP catalytic core consists of 2 alpha, 1 beta, 1 beta' and 1 omega subunit. When a sigma factor is associated with the core the holoenzyme is formed, which can initiate transcription.

The enzyme catalyses RNA(n) + a ribonucleoside 5'-triphosphate = RNA(n+1) + diphosphate. DNA-dependent RNA polymerase catalyzes the transcription of DNA into RNA using the four ribonucleoside triphosphates as substrates. This chain is DNA-directed RNA polymerase subunit alpha, found in Clavibacter sepedonicus (Clavibacter michiganensis subsp. sepedonicus).